A 321-amino-acid polypeptide reads, in one-letter code: Thioredoxin reductase (321 aa).

T36 to Q43 serves as a coordination point for FAD. Cysteines 136 and 139 form a disulfide. Residue D287 to A296 coordinates FAD.

This sequence belongs to the class-II pyridine nucleotide-disulfide oxidoreductase family. As to quaternary structure, homodimer. FAD is required as a cofactor.

It localises to the cytoplasm. The enzyme catalyses [thioredoxin]-dithiol + NADP(+) = [thioredoxin]-disulfide + NADPH + H(+). In Escherichia coli O157:H7, this protein is Thioredoxin reductase (trxB).